A 159-amino-acid chain; its full sequence is Small ribosomal subunit protein uS17y (159 aa).

It belongs to the universal ribosomal protein uS17 family.

Its subcellular location is the cytoplasm. The protein is Small ribosomal subunit protein uS17y (RPS11B) of Arabidopsis thaliana (Mouse-ear cress).